A 253-amino-acid chain; its full sequence is Imidazole glycerol phosphate synthase subunit HisF (253 aa).

Active-site residues include Asp-11 and Asp-130.

It belongs to the HisA/HisF family. As to quaternary structure, heterodimer of HisH and HisF.

It is found in the cytoplasm. The catalysed reaction is 5-[(5-phospho-1-deoxy-D-ribulos-1-ylimino)methylamino]-1-(5-phospho-beta-D-ribosyl)imidazole-4-carboxamide + L-glutamine = D-erythro-1-(imidazol-4-yl)glycerol 3-phosphate + 5-amino-1-(5-phospho-beta-D-ribosyl)imidazole-4-carboxamide + L-glutamate + H(+). The protein operates within amino-acid biosynthesis; L-histidine biosynthesis; L-histidine from 5-phospho-alpha-D-ribose 1-diphosphate: step 5/9. Its function is as follows. IGPS catalyzes the conversion of PRFAR and glutamine to IGP, AICAR and glutamate. The HisF subunit catalyzes the cyclization activity that produces IGP and AICAR from PRFAR using the ammonia provided by the HisH subunit. This chain is Imidazole glycerol phosphate synthase subunit HisF, found in Clostridium botulinum (strain Okra / Type B1).